The sequence spans 122 residues: MIQHESRLKVADNSGARELLVIKILGGSKRKTGNIGDIVVAAVKQATPGGVVKKGDVVKAVIVRTKSGARREDGSYIKFDENAAVVINADKSPRGTRIFGPVARELREHDFMKIVSLAPEVL.

It belongs to the universal ribosomal protein uL14 family. In terms of assembly, part of the 50S ribosomal subunit. Forms a cluster with proteins L3 and L19. In the 70S ribosome, L14 and L19 interact and together make contacts with the 16S rRNA in bridges B5 and B8.

In terms of biological role, binds to 23S rRNA. Forms part of two intersubunit bridges in the 70S ribosome. This Lactobacillus gasseri (strain ATCC 33323 / DSM 20243 / BCRC 14619 / CIP 102991 / JCM 1131 / KCTC 3163 / NCIMB 11718 / NCTC 13722 / AM63) protein is Large ribosomal subunit protein uL14.